The primary structure comprises 929 residues: LPS-assembly protein LptD (929 aa).

The first 33 residues, methionine 1 to alanine 33, serve as a signal peptide directing secretion. Residues asparagine 58–glycine 101 form a disordered region. The span at threonine 66–glutamate 90 shows a compositional bias: low complexity.

Belongs to the LptD family. Component of the lipopolysaccharide transport and assembly complex. Interacts with LptE and LptA.

The protein localises to the cell outer membrane. Functionally, together with LptE, is involved in the assembly of lipopolysaccharide (LPS) at the surface of the outer membrane. The protein is LPS-assembly protein LptD of Pseudomonas aeruginosa (strain LESB58).